The sequence spans 344 residues: Phosphate acyltransferase (344 aa).

The protein belongs to the PlsX family. In terms of assembly, homodimer. Probably interacts with PlsY.

Its subcellular location is the cytoplasm. The enzyme catalyses a fatty acyl-[ACP] + phosphate = an acyl phosphate + holo-[ACP]. It participates in lipid metabolism; phospholipid metabolism. Functionally, catalyzes the reversible formation of acyl-phosphate (acyl-PO(4)) from acyl-[acyl-carrier-protein] (acyl-ACP). This enzyme utilizes acyl-ACP as fatty acyl donor, but not acyl-CoA. The protein is Phosphate acyltransferase of Sphingopyxis alaskensis (strain DSM 13593 / LMG 18877 / RB2256) (Sphingomonas alaskensis).